Here is a 272-residue protein sequence, read N- to C-terminus: Putative phosphoenolpyruvate synthase regulatory protein (272 aa).

152–159 contacts ADP; it reads GVSRCGKT.

This sequence belongs to the pyruvate, phosphate/water dikinase regulatory protein family. PSRP subfamily.

The catalysed reaction is [pyruvate, water dikinase] + ADP = [pyruvate, water dikinase]-phosphate + AMP + H(+). It catalyses the reaction [pyruvate, water dikinase]-phosphate + phosphate + H(+) = [pyruvate, water dikinase] + diphosphate. Bifunctional serine/threonine kinase and phosphorylase involved in the regulation of the phosphoenolpyruvate synthase (PEPS) by catalyzing its phosphorylation/dephosphorylation. The chain is Putative phosphoenolpyruvate synthase regulatory protein from Pseudomonas fluorescens (strain SBW25).